The chain runs to 547 residues: GVPGPNGDVGPAGPTGPAGLDGAPGAQGPDGEPGLPGLPGQSGKSGASGQPGVPGPVGAAGKPGSIRGQPGPPGPPGDLGRPGERGAKGVRGTPGAPGVDGVAGIAGAIGFPGPMGPDGAAGPSGYPGFDGVAGKPGPQGAMGPKGQAGERGPQGTPGTQGSKGVVGPKGVVGPQGDSGDTGDAGQKGARGTAGSVGAKGTVGLPGNQGPQGPAGLKGVKGEKGEVGDKGILGPDGDKGPTGMSGDAGPAGPIGDAGIQGPPGQDGPTGAQGPRGGQGPKGPAGAVGDVGDRGSTGPAGPPGPPGPTGGGIILVPVNDQNPTRSPVSGSVFYRGQAEETDVNLGSVADVIELHKKLQHLKSPTGTKDSPARSCHDLFLEDNSTSDGYYWIDPNGGCIGDAVKVFCNFTGGVQQTCISATKNAGDLKSWSGHSIWFSDMLGGFKLTYDISRSQLQFIRAASRHAVQSFTYKCRNSAAAVIFRTQDNKEIAANKVTYDGCKSRPSVPDAAFVAVETKRVEQLPIRDFASSDIAGQHQEFGFEMGPACFY.

Disordered regions lie at residues 1–99 and 116–311; these read GVPG…APGV and GPDG…GGGI. Residues 1–280 are triple-helical region; the sequence is GVPGPNGDVG…QGPRGGQGPK (280 aa). Low complexity-rich tracts occupy residues 27–69 and 160–175; these read QGPD…IRGQ and QGSK…VGPQ. An Allysine modification is found at Lys-187. The segment covering 219–228 has biased composition (basic and acidic residues); it reads VKGEKGEVGD. Positions 246-271 are enriched in low complexity; the sequence is DAGPAGPIGDAGIQGPPGQDGPTGAQ. The segment covering 272 to 281 has biased composition (gly residues); that stretch reads GPRGGQGPKG. The tract at residues 308-336 is telopeptide; sequence GGGIILVPVNDQNPTRSPVSGSVFYRGQA. A propeptide spans 337-547 (C-terminal propeptide); sequence EETDVNLGSV…GFEMGPACFY (211 aa). One can recognise a Fibrillar collagen NC1 domain in the interval 343 to 547; that stretch reads LGSVADVIEL…GFEMGPACFY (205 aa). Asn-381 and Asn-406 each carry an N-linked (GlcNAc...) asparagine glycan.

This sequence belongs to the fibrillar collagen family.

The protein localises to the secreted. It is found in the extracellular space. Its subcellular location is the extracellular matrix. The chain is Collagen EMF1-alpha (COLF1) from Ephydatia muelleri (Mueller's freshwater sponge).